Consider the following 78-residue polypeptide: D-alanyl carrier protein (78 aa).

Residues 1–78 (MDFNQEVLSV…QIIKQLNELR (78 aa)) enclose the Carrier domain. Serine 36 carries the post-translational modification O-(pantetheine 4'-phosphoryl)serine.

The protein belongs to the DltC family. In terms of processing, 4'-phosphopantetheine is transferred from CoA to a specific serine of apo-DCP.

The protein resides in the cytoplasm. It functions in the pathway cell wall biogenesis; lipoteichoic acid biosynthesis. Its function is as follows. Carrier protein involved in the D-alanylation of lipoteichoic acid (LTA). The loading of thioester-linked D-alanine onto DltC is catalyzed by D-alanine--D-alanyl carrier protein ligase DltA. The DltC-carried D-alanyl group is further transferred to cell membrane phosphatidylglycerol (PG) by forming an ester bond, probably catalyzed by DltD. D-alanylation of LTA plays an important role in modulating the properties of the cell wall in Gram-positive bacteria, influencing the net charge of the cell wall. The protein is D-alanyl carrier protein of Bacillus licheniformis (strain ATCC 14580 / DSM 13 / JCM 2505 / CCUG 7422 / NBRC 12200 / NCIMB 9375 / NCTC 10341 / NRRL NRS-1264 / Gibson 46).